Consider the following 396-residue polypeptide: Phosphoglycerate kinase (396 aa).

Residues D21 to N23, R37, H60 to R63, R121, and R154 contribute to the substrate site. ATP-binding positions include K205, G296, E327, and G353–S356.

The protein belongs to the phosphoglycerate kinase family. As to quaternary structure, monomer.

It localises to the cytoplasm. The enzyme catalyses (2R)-3-phosphoglycerate + ATP = (2R)-3-phospho-glyceroyl phosphate + ADP. It participates in carbohydrate degradation; glycolysis; pyruvate from D-glyceraldehyde 3-phosphate: step 2/5. The chain is Phosphoglycerate kinase from Anaeromyxobacter dehalogenans (strain 2CP-1 / ATCC BAA-258).